The chain runs to 513 residues: Prostaglandin E2 receptor EP4 subtype (513 aa).

The Extracellular portion of the chain corresponds to 1 to 44 (MAEVGGTIPRSNRELQRCVLLTTTIMSIPGVNASFSSTPERLNS). N-linked (GlcNAc...) asparagine glycosylation is present at N32. Residues 45-68 (PVTIPAVMFIFGVVGNLVAIVVLC) traverse the membrane as a helical segment. Topologically, residues 69–80 (KSRKEQKETTFY) are cytoplasmic. A helical membrane pass occupies residues 81–104 (TLVCGLAVTDLLGTLLVSPVTIAT). Residues 105-121 (YMKGQWPGDQALCDYST) are Extracellular-facing. Residues C117 and C195 are joined by a disulfide bond. The helical transmembrane segment at 122 to 140 (FILLFFGLSGLSIICAMSI) threads the bilayer. At 141-160 (ERYLAINHAYFYSHYVDKRL) the chain is on the cytoplasmic side. Residues 161 to 185 (AGLTLFAIYASNVLFCALPNMGLGR) traverse the membrane as a helical segment. Residues 186-209 (SERQYPGTWCFIDWTTNVTAYAAF) are Extracellular-facing. Residues 210–236 (SYMYAGFSSFLILATVLCNVLVCGALL) form a helical membrane-spanning segment. At 237–295 (RMHRQFMRRTSLGTEQHHAAAAAAVASVACRGHAGASPALQRLSDFRRRRSFRRIAGAE) the chain is on the cytoplasmic side. A helical transmembrane segment spans residues 296–323 (IQMVILLIATSLVVLICSIPLVVRVFIN). Over 324–340 (QLYQPNVVKDISRNPDL) the chain is Extracellular. The helical transmembrane segment at 341 to 360 (QAIRIASVNPILDPWIYILL) threads the bilayer. Topologically, residues 361 to 513 (RKTVLSKAIE…ETLKLSEKCI (153 aa)) are cytoplasmic. Positions 383-403 (GRDSSAQHCSESRRTSSAMSG) are disordered. Positions 384-403 (RDSSAQHCSESRRTSSAMSG) are enriched in polar residues. 3 positions are modified to phosphoserine: S402, S405, and S407.

This sequence belongs to the G-protein coupled receptor 1 family. As to quaternary structure, interacts with FEM1A. Post-translationally, phosphorylation mediates agonist-mediated desensitization by promoting cytoplasmic retention. Abundant expression in ileum, thymus and mastocytoma P-815 cells. Also observed in lung, spleen, heart and uterus.

The protein localises to the cell membrane. Receptor for prostaglandin E2 (PGE2). The activity of this receptor is mediated by G(s) proteins that stimulate adenylate cyclase. Has a relaxing effect on smooth muscle. May play an important role in regulating renal hemodynamics, intestinal epithelial transport, adrenal aldosterone secretion, and uterine function. This is Prostaglandin E2 receptor EP4 subtype (Ptger4) from Mus musculus (Mouse).